A 384-amino-acid chain; its full sequence is 8-amino-7-oxononanoate synthase (384 aa).

Position 21 (Arg21) interacts with substrate. A pyridoxal 5'-phosphate-binding site is contributed by 108-109 (GY). His133 provides a ligand contact to substrate. Pyridoxal 5'-phosphate is bound by residues Ser179, His207, and Thr233. Lys236 is subject to N6-(pyridoxal phosphate)lysine. Thr350 contacts substrate.

The protein belongs to the class-II pyridoxal-phosphate-dependent aminotransferase family. BioF subfamily. In terms of assembly, homodimer. Pyridoxal 5'-phosphate is required as a cofactor.

It catalyses the reaction 6-carboxyhexanoyl-[ACP] + L-alanine + H(+) = (8S)-8-amino-7-oxononanoate + holo-[ACP] + CO2. It functions in the pathway cofactor biosynthesis; biotin biosynthesis. In terms of biological role, catalyzes the decarboxylative condensation of pimeloyl-[acyl-carrier protein] and L-alanine to produce 8-amino-7-oxononanoate (AON), [acyl-carrier protein], and carbon dioxide. The sequence is that of 8-amino-7-oxononanoate synthase from Buchnera aphidicola subsp. Baizongia pistaciae (strain Bp).